We begin with the raw amino-acid sequence, 307 residues long: UDP-3-O-acyl-N-acetylglucosamine deacetylase (307 aa).

Zn(2+) is bound by residues histidine 78, histidine 241, and aspartate 245. Histidine 268 functions as the Proton donor in the catalytic mechanism.

The protein belongs to the LpxC family. Zn(2+) is required as a cofactor.

It catalyses the reaction a UDP-3-O-[(3R)-3-hydroxyacyl]-N-acetyl-alpha-D-glucosamine + H2O = a UDP-3-O-[(3R)-3-hydroxyacyl]-alpha-D-glucosamine + acetate. It functions in the pathway glycolipid biosynthesis; lipid IV(A) biosynthesis; lipid IV(A) from (3R)-3-hydroxytetradecanoyl-[acyl-carrier-protein] and UDP-N-acetyl-alpha-D-glucosamine: step 2/6. Functionally, catalyzes the hydrolysis of UDP-3-O-myristoyl-N-acetylglucosamine to form UDP-3-O-myristoylglucosamine and acetate, the committed step in lipid A biosynthesis. This Acidovorax ebreus (strain TPSY) (Diaphorobacter sp. (strain TPSY)) protein is UDP-3-O-acyl-N-acetylglucosamine deacetylase.